The primary structure comprises 156 residues: Small ribosomal subunit protein uS7 (156 aa).

This sequence belongs to the universal ribosomal protein uS7 family. Part of the 30S ribosomal subunit. Contacts proteins S9 and S11.

In terms of biological role, one of the primary rRNA binding proteins, it binds directly to 16S rRNA where it nucleates assembly of the head domain of the 30S subunit. Is located at the subunit interface close to the decoding center, probably blocks exit of the E-site tRNA. The sequence is that of Small ribosomal subunit protein uS7 from Edwardsiella ictaluri (strain 93-146).